A 417-amino-acid chain; its full sequence is Squalene synthase (417 aa).

Residues R52 and R77 each contribute to the NADP(+) site. Positions 80, 83, and 84 each coordinate Mg(2+). Position 218 (R218) interacts with NADP(+). The chain crosses the membrane as a helical span at residues 284-304 (SIFNFCAIPQVMAIATLAACY). NADP(+) is bound by residues K315 and R317. Residues 384–404 (PIYLSFVMLLAALSWQYLSTL) form a helical membrane-spanning segment.

It belongs to the phytoene/squalene synthase family. Mg(2+) is required as a cofactor.

The protein resides in the endoplasmic reticulum membrane. It carries out the reaction 2 (2E,6E)-farnesyl diphosphate + NADPH + H(+) = squalene + 2 diphosphate + NADP(+). It catalyses the reaction 2 (2E,6E)-farnesyl diphosphate + NADH + H(+) = squalene + 2 diphosphate + NAD(+). The catalysed reaction is presqualene diphosphate + NADH + H(+) = squalene + diphosphate + NAD(+). The enzyme catalyses presqualene diphosphate + NADPH + H(+) = squalene + diphosphate + NADP(+). It carries out the reaction 2 (2E,6E)-farnesyl diphosphate = presqualene diphosphate + diphosphate. It functions in the pathway terpene metabolism; lanosterol biosynthesis; lanosterol from farnesyl diphosphate: step 1/3. Functionally, catalyzes the condensation of 2 farnesyl pyrophosphate (FPP) moieties to form squalene. Proceeds in two distinct steps. In the first half-reaction, two molecules of FPP react to form the stable presqualene diphosphate intermediate (PSQPP), with concomitant release of a proton and a molecule of inorganic diphosphate. In the second half-reaction, PSQPP undergoes heterolysis, isomerization, and reduction with NADPH or NADH to form squalene. It is the first committed enzyme of the sterol biosynthesis pathway. This chain is Squalene synthase (FDFT1), found in Bos taurus (Bovine).